Here is a 303-residue protein sequence, read N- to C-terminus: Crk-like protein (303 aa).

In terms of domain architecture, SH2 spans 14–102 (WYMGPVTRQE…LDTTTLIEPA (89 aa)). In terms of domain architecture, SH3 1 spans 123 to 183 (ENLEYVRTLY…PVPYVEKLVR (61 aa)). Tyr127 is subject to Phosphotyrosine. Residues 184 to 203 (SSPHGKHGNRNSNSYGIPEP) are disordered. Tyr207 is subject to Phosphotyrosine. The SH3 2 domain maps to 235-296 (NGPVFAKAIQ…PFTHVKIFDP (62 aa)).

This sequence belongs to the CRK family. In terms of assembly, interacts with DOCK2 and EPOR. Interacts with phosphorylated CBLB and IRS4. Interacts with INPP5D/SHIP1. Interacts with BCAR1/CAS and NEDD9/HEF1. Post-translationally, phosphorylated on tyrosine. Phosphorylation is prominent during early development, but decreases at later embryonic stages and in newborn mice.

Its function is as follows. May mediate the transduction of intracellular signals. In Mus musculus (Mouse), this protein is Crk-like protein (Crkl).